The chain runs to 410 residues: MTARLALLASLLLLLQLVPPSSAVVLELHGNVYPIGHFFITMNIGDPAKSYFLDIDTGSTLTWLQCDAPCTNCNIVPHVLYKPTPKKLVTCADSLCTDLYTDLGKPKRCGSQKQCDYVIQYVDSSSMGVLVIDRFSLSASNGTNPTTIAFGCGYDQGKKNRNVPIPVDSILGLSRGKVTLLSQLKSQGVITKHVLGHCISSKGGGFLFFGDAQVPTSGVTWTPMNREHKYYSPGHGTLHFDSNSKAISAAPMAVIFDSGATYTYFAAQPYQATLSVVKSTLNSECKFLTEVTEKDRALTVCWKGKDKIVTIDEVKKCFRSLSLEFADGDKKATLEIPPEHYLIISQEGHVCLGILDGSKEHLSLAGTNLIGGITMLDQMVIYDSERSLLGWVNYQCDRIPRSESAITSRL.

The first 23 residues, 1–23 (MTARLALLASLLLLLQLVPPSSA), serve as a signal peptide directing secretion. A propeptide spans 24 to 46 (VVLELHGNVYPIGHFFITMNIGD) (removed in mature form). Residues 38 to 392 (FFITMNIGDP…DSERSLLGWV (355 aa)) enclose the Peptidase A1 domain. Catalysis depends on residues aspartate 56 and aspartate 257.

Belongs to the peptidase A1 family.

The chain is Aspartic proteinase Asp1 (ASP1) from Oryza sativa subsp. japonica (Rice).